The following is a 180-amino-acid chain: ATP synthase subunit delta (180 aa).

This sequence belongs to the ATPase delta chain family. In terms of assembly, F-type ATPases have 2 components, F(1) - the catalytic core - and F(0) - the membrane proton channel. F(1) has five subunits: alpha(3), beta(3), gamma(1), delta(1), epsilon(1). F(0) has three main subunits: a(1), b(2) and c(10-14). The alpha and beta chains form an alternating ring which encloses part of the gamma chain. F(1) is attached to F(0) by a central stalk formed by the gamma and epsilon chains, while a peripheral stalk is formed by the delta and b chains.

It localises to the cell inner membrane. In terms of biological role, f(1)F(0) ATP synthase produces ATP from ADP in the presence of a proton or sodium gradient. F-type ATPases consist of two structural domains, F(1) containing the extramembraneous catalytic core and F(0) containing the membrane proton channel, linked together by a central stalk and a peripheral stalk. During catalysis, ATP synthesis in the catalytic domain of F(1) is coupled via a rotary mechanism of the central stalk subunits to proton translocation. Its function is as follows. This protein is part of the stalk that links CF(0) to CF(1). It either transmits conformational changes from CF(0) to CF(1) or is implicated in proton conduction. The chain is ATP synthase subunit delta from Geobacter sp. (strain M21).